The sequence spans 337 residues: Alanine racemase (337 aa).

Catalysis depends on Lys33, which acts as the Proton acceptor; specific for D-alanine. An N6-(pyridoxal phosphate)lysine modification is found at Lys33. Arg118 serves as a coordination point for substrate. Tyr246 acts as the Proton acceptor; specific for L-alanine in catalysis. Met292 is a substrate binding site.

The protein belongs to the alanine racemase family. Pyridoxal 5'-phosphate is required as a cofactor.

It catalyses the reaction L-alanine = D-alanine. It functions in the pathway amino-acid biosynthesis; D-alanine biosynthesis; D-alanine from L-alanine: step 1/1. Functionally, catalyzes the interconversion of L-alanine and D-alanine. May also act on other amino acids. The polypeptide is Alanine racemase (alr) (Campylobacter curvus (strain 525.92)).